A 373-amino-acid polypeptide reads, in one-letter code: Histidinol-phosphate aminotransferase 2 (373 aa).

Residue lysine 229 is modified to N6-(pyridoxal phosphate)lysine.

Belongs to the class-II pyridoxal-phosphate-dependent aminotransferase family. Histidinol-phosphate aminotransferase subfamily. As to quaternary structure, homodimer. It depends on pyridoxal 5'-phosphate as a cofactor.

It carries out the reaction L-histidinol phosphate + 2-oxoglutarate = 3-(imidazol-4-yl)-2-oxopropyl phosphate + L-glutamate. It functions in the pathway amino-acid biosynthesis; L-histidine biosynthesis; L-histidine from 5-phospho-alpha-D-ribose 1-diphosphate: step 7/9. The polypeptide is Histidinol-phosphate aminotransferase 2 (Hydrogenovibrio crunogenus (strain DSM 25203 / XCL-2) (Thiomicrospira crunogena)).